Consider the following 666-residue polypeptide: DNA ligase (666 aa).

NAD(+)-binding positions include 31 to 35, 80 to 81, and Glu-110; these read DKEFD and SL. The N6-AMP-lysine intermediate role is filled by Lys-112. The NAD(+) site is built by Arg-133, Glu-170, Lys-285, and Lys-309. Residues Cys-404, Cys-407, Cys-422, and Cys-428 each coordinate Zn(2+). A BRCT domain is found at 588–666; the sequence is GYTDKLAGQS…SEDEFLKLIS (79 aa).

Belongs to the NAD-dependent DNA ligase family. LigA subfamily. Requires Mg(2+) as cofactor. Mn(2+) serves as cofactor.

The catalysed reaction is NAD(+) + (deoxyribonucleotide)n-3'-hydroxyl + 5'-phospho-(deoxyribonucleotide)m = (deoxyribonucleotide)n+m + AMP + beta-nicotinamide D-nucleotide.. Functionally, DNA ligase that catalyzes the formation of phosphodiester linkages between 5'-phosphoryl and 3'-hydroxyl groups in double-stranded DNA using NAD as a coenzyme and as the energy source for the reaction. It is essential for DNA replication and repair of damaged DNA. The polypeptide is DNA ligase (Bacteroides thetaiotaomicron (strain ATCC 29148 / DSM 2079 / JCM 5827 / CCUG 10774 / NCTC 10582 / VPI-5482 / E50)).